The following is a 1197-amino-acid chain: Neural cell adhesion molecule L1.1 (1197 aa).

Ig-like C2-type domains lie at 1–58, 69–160, 165–263, 268–355, and 360–442; these read EFRQ…TAVS, PSLA…EPMS, PSNS…YTVT, PYWT…THVH, and PAQI…KSIS. Residues 1-1054 are Extracellular-facing; the sequence is EFRQRDPSPS…SPRNFATEGW (1054 aa). Cys-92 and Cys-143 are joined by a disulfide. 8 N-linked (GlcNAc...) asparagine glycosylation sites follow: Asn-135, Asn-149, Asn-221, Asn-298, Asn-414, Asn-421, Asn-438, and Asn-449. 3 cysteine pairs are disulfide-bonded: Cys-199–Cys-247, Cys-289–Cys-339, and Cys-383–Cys-432. Positions 451 to 541 constitute an Ig-like C2-type 6 domain; it reads TKIVGPPQNL…DSDTASGYIT (91 aa). A disulfide bond links Cys-472 and Cys-525. Fibronectin type-III domains lie at 548-643, 645-742, 747-852, 853-952, and 953-1048; these read PPQS…TPAA, PDTN…SGED, APSA…TPEG, APGP…LLDG, and EPPS…SPRN. The span at 630–640 shows a compositional bias: polar residues; sequence APTESSLSYST. Residues 630-655 form a disordered region; the sequence is APTESSLSYSTPAAKPDTNPENVMTL. Asn-708 is a glycosylation site (N-linked (GlcNAc...) asparagine). Residues Asn-959, Asn-968, Asn-1002, and Asn-1027 are each glycosylated (N-linked (GlcNAc...) asparagine). Residues 1055–1075 traverse the membrane as a helical segment; that stretch reads FIGLISALVLLLLVLLLLCYI. The Cytoplasmic segment spans residues 1076-1197; the sequence is KKSKGGKYSV…TSVTGILGPN (122 aa). Disordered regions lie at residues 1115 to 1135 and 1154 to 1197; these read MEKC…SNDS and IGQY…LGPN.

It belongs to the immunoglobulin superfamily. L1/neurofascin/NgCAM family. In terms of tissue distribution, expressed in postmitotic neurons in 16-36 hours embryos, including those in the brain, cranial ganglia and otic and olfactory placodes, and in all classes of spinal neurons.

It is found in the cell membrane. Its subcellular location is the cell projection. The protein resides in the growth cone. Cell adhesion molecule with an important role in the development of the nervous system. Involved in neuron-neuron adhesion, neurite fasciculation, outgrowth of neurites, etc. Binds to axonin on neurons. This Danio rerio (Zebrafish) protein is Neural cell adhesion molecule L1.1 (nadl1.1).